A 232-amino-acid chain; its full sequence is Orotate phosphoribosyltransferase (232 aa).

5-phospho-alpha-D-ribose 1-diphosphate is bound by residues R107, K108, K111, H113, and 133–141 (EDLTTAGGS). T137 is a binding site for orotate.

This sequence belongs to the purine/pyrimidine phosphoribosyltransferase family. PyrE subfamily. Homodimer. Requires Mg(2+) as cofactor.

It catalyses the reaction orotidine 5'-phosphate + diphosphate = orotate + 5-phospho-alpha-D-ribose 1-diphosphate. Its pathway is pyrimidine metabolism; UMP biosynthesis via de novo pathway; UMP from orotate: step 1/2. Catalyzes the transfer of a ribosyl phosphate group from 5-phosphoribose 1-diphosphate to orotate, leading to the formation of orotidine monophosphate (OMP). This chain is Orotate phosphoribosyltransferase, found in Rhizobium rhizogenes (strain K84 / ATCC BAA-868) (Agrobacterium radiobacter).